A 1827-amino-acid polypeptide reads, in one-letter code: Sucrase-isomaltase, intestinal (1827 aa).

The Cytoplasmic portion of the chain corresponds to 2–12; sequence AKRKFSGLEIT. Position 7 is a phosphoserine; by PKA (Ser7). Residues 13–32 form a helical; Signal-anchor for type II membrane protein membrane-spanning segment; sequence LIVLFVIVFIIAIALIAVLA. At 33 to 1827 the chain is on the lumenal side; that stretch reads TKTPAVEEVN…LDDPIEISWS (1795 aa). Residues 39–64 are disordered; it reads EEVNPSSSTPTTTSTTTSTSGSVSCP. Positions 43–64 are enriched in low complexity; the sequence is PSSSTPTTTSTTTSTSGSVSCP. Residues 61 to 110 enclose the P-type 1 domain; sequence VSCPSELNEVVNERINCIPEQSPTQAICAQRNCCWRPWNNSDIPWCFFVD. Intrachain disulfides connect Cys63–Cys94, Cys77–Cys93, and Cys88–Cys106. N-linked (GlcNAc...) asparagine glycosylation occurs at Asn99. Positions 110–1007 are isomaltase; it reads DNHGYNVEGM…DLQLNPTRTR (898 aa). Asp264 and Asp388 together coordinate substrate. Residues Tyr391 and Tyr400 each carry the sulfotyrosine modification. Asn455 carries N-linked (GlcNAc...) asparagine glycosylation. Catalysis depends on Asp505, which acts as the Nucleophile; for isomaltase activity. Cys520 and Cys545 are disulfide-bonded. Arg588 is a binding site for substrate. Asp604 serves as the catalytic For isomaltase activity. An intrachain disulfide couples Cys635 to Cys646. His662 is a substrate binding site. Residues Asn859, Asn896, and Asn904 are each glycosylated (N-linked (GlcNAc...) asparagine). One can recognise a P-type 2 domain in the interval 932 to 978; sequence DQTFLESEKITCYPDADIATQEKCTQRGCIWDTNTVNPRAPECYFPK. Positions 1008-1827 are sucrase; the sequence is ITLPSEPITN…LDDPIEISWS (820 aa). N-linked (GlcNAc...) asparagine glycans are attached at residues Asn1235, Asn1303, Asn1325, Asn1340, Asn1354, and Asn1368. 2 positions are modified to sulfotyrosine: Tyr1382 and Tyr1385. Asp1394 (nucleophile; for sucrase activity) is an active-site residue. The For sucrase activity role is filled by Glu1397. An N-linked (GlcNAc...) asparagine glycan is attached at Asn1403. Asp1500 serves as the catalytic Proton donor; for sucrase activity. Asn1535, Asn1572, Asn1748, Asn1763, and Asn1799 each carry an N-linked (GlcNAc...) asparagine glycan.

The protein belongs to the glycosyl hydrolase 31 family. In terms of assembly, the resulting sucrase and isomaltase subunits stay associated with one another in a complex by non-covalent linkages. Post-translationally, the precursor is proteolytically cleaved when exposed to pancreatic proteases in the intestinal lumen. N- and O-glycosylated. In terms of processing, sulfated.

It is found in the apical cell membrane. It catalyses the reaction Hydrolysis of sucrose and maltose by an alpha-D-glucosidase-type action.. The catalysed reaction is Hydrolysis of (1-&gt;6)-alpha-D-glucosidic linkages in some oligosaccharides produced from starch and glycogen by alpha-amylase, and in isomaltose.. Its function is as follows. Plays an important role in the final stage of carbohydrate digestion. Isomaltase activity is specific for both alpha-1,4- and alpha-1,6-oligosaccharides. This is Sucrase-isomaltase, intestinal (SI) from Oryctolagus cuniculus (Rabbit).